The primary structure comprises 78 residues: Dihydrofolate reductase type 2 (78 aa).

NADP(+) is bound by residues Lys32 and 66–69 (VQIY). Residue Ile68 participates in substrate binding.

Homotetramer.

It catalyses the reaction (6S)-5,6,7,8-tetrahydrofolate + NADP(+) = 7,8-dihydrofolate + NADPH + H(+). It participates in cofactor biosynthesis; tetrahydrofolate biosynthesis; 5,6,7,8-tetrahydrofolate from 7,8-dihydrofolate: step 1/1. Its function is as follows. Key enzyme in folate metabolism. Catalyzes an essential reaction for de novo glycine and purine synthesis, and for DNA precursor synthesis. This Escherichia coli protein is Dihydrofolate reductase type 2.